Consider the following 73-residue polypeptide: Cell division protein ZapB (73 aa).

A coiled-coil region spans residues Leu3–Gly67.

The protein belongs to the ZapB family. Homodimer. The ends of the coiled-coil dimer bind to each other, forming polymers. Interacts with FtsZ.

The protein localises to the cytoplasm. Its function is as follows. Non-essential, abundant cell division factor that is required for proper Z-ring formation. It is recruited early to the divisome by direct interaction with FtsZ, stimulating Z-ring assembly and thereby promoting cell division earlier in the cell cycle. Its recruitment to the Z-ring requires functional FtsA or ZipA. In Shewanella sp. (strain MR-4), this protein is Cell division protein ZapB.